A 225-amino-acid polypeptide reads, in one-letter code: Probable septum site-determining protein MinC (225 aa).

The disordered stretch occupies residues 87 to 112 (PTHMASPQGNSSKTRSSDTQPKPKTP). Over residues 91–108 (ASPQGNSSKTRSSDTQPK) the composition is skewed to polar residues.

The protein belongs to the MinC family. As to quaternary structure, interacts with MinD and FtsZ.

In terms of biological role, cell division inhibitor that blocks the formation of polar Z ring septums. Rapidly oscillates between the poles of the cell to destabilize FtsZ filaments that have formed before they mature into polar Z rings. Prevents FtsZ polymerization. This chain is Probable septum site-determining protein MinC, found in Prochlorococcus marinus (strain MIT 9313).